The primary structure comprises 352 residues: tRNA N6-adenosine threonylcarbamoyltransferase (352 aa).

Fe cation is bound by residues His117 and His121. Residues 140 to 144, Asp173, Gly186, and Asn287 contribute to the substrate site; that span reads LVSGG. Asp315 is a binding site for Fe cation.

It belongs to the KAE1 / TsaD family. It depends on Fe(2+) as a cofactor.

The protein localises to the cytoplasm. The enzyme catalyses L-threonylcarbamoyladenylate + adenosine(37) in tRNA = N(6)-L-threonylcarbamoyladenosine(37) in tRNA + AMP + H(+). Its function is as follows. Required for the formation of a threonylcarbamoyl group on adenosine at position 37 (t(6)A37) in tRNAs that read codons beginning with adenine. Is involved in the transfer of the threonylcarbamoyl moiety of threonylcarbamoyl-AMP (TC-AMP) to the N6 group of A37, together with TsaE and TsaB. TsaD likely plays a direct catalytic role in this reaction. The protein is tRNA N6-adenosine threonylcarbamoyltransferase of Psychrobacter cryohalolentis (strain ATCC BAA-1226 / DSM 17306 / VKM B-2378 / K5).